We begin with the raw amino-acid sequence, 79 residues long: Ixosin (79 aa).

A propeptide spans 1–56 (removed in mature form); sequence MSAHKVQIGLSSGQFRVALQVPSVRLKGLGSFHTGSIVLPSQGSLREDQISLHNQD.

Functionally, has antifungal activity against C.albicans. Has antibacterial activity against the Gram-positive bacterium S.aureus and the Gram-negative bacterium E.coli. Lacks hemolytic activity against rabbit erythrocytes. The chain is Ixosin from Ixodes sinensis (Hard tick).